A 510-amino-acid polypeptide reads, in one-letter code: Glycosyl hydrolase YngK (510 aa).

The first 30 residues, 1–30 (MKVCQKSIVRFLVSLIIGTFVISVPFMANA), serve as a signal peptide directing secretion.

This sequence belongs to the glycosyl hydrolase-like 10 (GHL10) family.

This chain is Glycosyl hydrolase YngK (yngK), found in Bacillus subtilis (strain 168).